Reading from the N-terminus, the 322-residue chain is GDSL esterase/lipase At2g04020 (322 aa).

The signal sequence occupies residues 1 to 26; the sequence is MGLPSSLESYLLLILLSFLNVSTIYS. Ser-50 functions as the Nucleophile in the catalytic mechanism. Asn-260 carries N-linked (GlcNAc...) asparagine glycosylation. Active-site residues include Asp-296 and His-299.

It belongs to the 'GDSL' lipolytic enzyme family.

The protein resides in the secreted. The chain is GDSL esterase/lipase At2g04020 from Arabidopsis thaliana (Mouse-ear cress).